A 461-amino-acid chain; its full sequence is uncharacterized protein (461 aa).

Transmembrane regions (helical) follow at residues I18–Y38 and F124–I144. PLD phosphodiesterase domains lie at Y197 to Y224 and T374 to S401.

This sequence belongs to the phospholipase D family. Cardiolipin synthase subfamily.

It localises to the cell membrane. This is an uncharacterized protein from Streptococcus mutans serotype c (strain ATCC 700610 / UA159).